A 212-amino-acid polypeptide reads, in one-letter code: Peptide methionine sulfoxide reductase MsrA (212 aa).

Residue Cys-52 is part of the active site.

The protein belongs to the MsrA Met sulfoxide reductase family.

It carries out the reaction L-methionyl-[protein] + [thioredoxin]-disulfide + H2O = L-methionyl-(S)-S-oxide-[protein] + [thioredoxin]-dithiol. The enzyme catalyses [thioredoxin]-disulfide + L-methionine + H2O = L-methionine (S)-S-oxide + [thioredoxin]-dithiol. Has an important function as a repair enzyme for proteins that have been inactivated by oxidation. Catalyzes the reversible oxidation-reduction of methionine sulfoxide in proteins to methionine. This chain is Peptide methionine sulfoxide reductase MsrA, found in Salmonella paratyphi B (strain ATCC BAA-1250 / SPB7).